The chain runs to 411 residues: Serine hydroxymethyltransferase (411 aa).

(6S)-5,6,7,8-tetrahydrofolate-binding positions include L113 and 117–119 (GHL). Residue K222 is modified to N6-(pyridoxal phosphate)lysine. 346–348 (SPF) contacts (6S)-5,6,7,8-tetrahydrofolate.

It belongs to the SHMT family. Homodimer. Pyridoxal 5'-phosphate is required as a cofactor.

The protein resides in the cytoplasm. It carries out the reaction (6R)-5,10-methylene-5,6,7,8-tetrahydrofolate + glycine + H2O = (6S)-5,6,7,8-tetrahydrofolate + L-serine. It participates in one-carbon metabolism; tetrahydrofolate interconversion. Its pathway is amino-acid biosynthesis; glycine biosynthesis; glycine from L-serine: step 1/1. Catalyzes the reversible interconversion of serine and glycine with tetrahydrofolate (THF) serving as the one-carbon carrier. This reaction serves as the major source of one-carbon groups required for the biosynthesis of purines, thymidylate, methionine, and other important biomolecules. Also exhibits THF-independent aldolase activity toward beta-hydroxyamino acids, producing glycine and aldehydes, via a retro-aldol mechanism. This is Serine hydroxymethyltransferase from Prochlorococcus marinus (strain NATL2A).